The following is a 505-amino-acid chain: Betaine aldehyde dehydrogenase (505 aa).

Residue 239–244 (GSTATG) coordinates NAD(+). E261 serves as the catalytic Proton acceptor. C296 functions as the Nucleophile in the catalytic mechanism. A Microbody targeting signal motif is present at residues 503–505 (SKL).

The protein belongs to the aldehyde dehydrogenase family. As to quaternary structure, homodimer.

Its subcellular location is the peroxisome. It catalyses the reaction betaine aldehyde + NAD(+) + H2O = glycine betaine + NADH + 2 H(+). It participates in amine and polyamine biosynthesis; betaine biosynthesis via choline pathway; betaine from betaine aldehyde: step 1/1. The polypeptide is Betaine aldehyde dehydrogenase (Hordeum vulgare (Barley)).